Here is a 294-residue protein sequence, read N- to C-terminus: Lipoyl synthase 1 (294 aa).

[4Fe-4S] cluster-binding residues include cysteine 38, cysteine 43, cysteine 49, cysteine 64, cysteine 68, cysteine 71, and serine 279. Residues 50–268 enclose the Radical SAM core domain; sequence FAGGTATFLI…EEGQTRFGFL (219 aa).

It belongs to the radical SAM superfamily. Lipoyl synthase family. The cofactor is [4Fe-4S] cluster.

It localises to the cytoplasm. The catalysed reaction is [[Fe-S] cluster scaffold protein carrying a second [4Fe-4S](2+) cluster] + N(6)-octanoyl-L-lysyl-[protein] + 2 oxidized [2Fe-2S]-[ferredoxin] + 2 S-adenosyl-L-methionine + 4 H(+) = [[Fe-S] cluster scaffold protein] + N(6)-[(R)-dihydrolipoyl]-L-lysyl-[protein] + 4 Fe(3+) + 2 hydrogen sulfide + 2 5'-deoxyadenosine + 2 L-methionine + 2 reduced [2Fe-2S]-[ferredoxin]. It functions in the pathway protein modification; protein lipoylation via endogenous pathway; protein N(6)-(lipoyl)lysine from octanoyl-[acyl-carrier-protein]: step 2/2. Catalyzes the radical-mediated insertion of two sulfur atoms into the C-6 and C-8 positions of the octanoyl moiety bound to the lipoyl domains of lipoate-dependent enzymes, thereby converting the octanoylated domains into lipoylated derivatives. This is Lipoyl synthase 1 from Prochlorococcus marinus (strain SARG / CCMP1375 / SS120).